The sequence spans 318 residues: Nodulation protein D 2 (318 aa).

The HTH lysR-type domain occupies 6-63 (LDLNLLVALDALTTERNLTAAARSINLSQPAMSAAIGRLRDYFRDELFTMNGRELRLT). The segment at residues 23–42 (LTAAARSINLSQPAMSAAIG) is a DNA-binding region (H-T-H motif).

It belongs to the LysR transcriptional regulatory family.

In terms of biological role, nodD regulates the expression of the nodABCFE genes which encode other nodulation proteins. NodD is also a negative regulator of its own expression. Binds flavonoids as inducers. In Rhizobium leguminosarum bv. phaseoli, this protein is Nodulation protein D 2 (nodD2).